The following is a 425-amino-acid chain: Serine--tRNA ligase (425 aa).

Position 230 to 232 (230 to 232) interacts with L-serine; sequence TSE. Residue 261–263 participates in ATP binding; the sequence is RKE. Glu284 is a binding site for L-serine. 348–351 is an ATP binding site; sequence EISS. An L-serine-binding site is contributed by Ser385.

Belongs to the class-II aminoacyl-tRNA synthetase family. Type-1 seryl-tRNA synthetase subfamily. In terms of assembly, homodimer. The tRNA molecule binds across the dimer.

Its subcellular location is the cytoplasm. It carries out the reaction tRNA(Ser) + L-serine + ATP = L-seryl-tRNA(Ser) + AMP + diphosphate + H(+). The enzyme catalyses tRNA(Sec) + L-serine + ATP = L-seryl-tRNA(Sec) + AMP + diphosphate + H(+). It participates in aminoacyl-tRNA biosynthesis; selenocysteinyl-tRNA(Sec) biosynthesis; L-seryl-tRNA(Sec) from L-serine and tRNA(Sec): step 1/1. Its function is as follows. Catalyzes the attachment of serine to tRNA(Ser). Is also able to aminoacylate tRNA(Sec) with serine, to form the misacylated tRNA L-seryl-tRNA(Sec), which will be further converted into selenocysteinyl-tRNA(Sec). The chain is Serine--tRNA ligase from Wolbachia pipientis wMel.